Here is a 420-residue protein sequence, read N- to C-terminus: uncharacterized protein (420 aa).

The TRAM domain occupies 7 to 65; it reads NIERGSVINVEILNAAHGGQGIAKYDGRVIFVKGAFPGDRLSANITHVKKKFARATIAS. Positions 245, 280, 304, and 349 each coordinate S-adenosyl-L-methionine. C376 serves as the catalytic Nucleophile.

This sequence belongs to the class I-like SAM-binding methyltransferase superfamily. RNA M5U methyltransferase family.

This is an uncharacterized protein from Corynebacterium diphtheriae (strain ATCC 700971 / NCTC 13129 / Biotype gravis).